A 1042-amino-acid chain; its full sequence is Signal-induced proliferation-associated protein 1 (1042 aa).

2 disordered regions span residues 1–87 (MPMW…TSTR) and 132–153 (SQGM…EDQA). Thr-64 is modified (phosphothreonine). Ser-67 bears the Phosphoserine mark. Positions 134-146 (GMGSHSEASSGTL) are enriched in polar residues. A phosphoserine mark is found at Ser-182, Ser-304, and Ser-314. In terms of domain architecture, Rap-GAP spans 321-539 (LLTLDEQVLS…RTRQQYLQDL (219 aa)). The 77-residue stretch at 687–763 (ELALPRDGQG…VCVTVLPPDE (77 aa)) folds into the PDZ domain. 3 positions are modified to phosphoserine: Ser-817, Ser-839, and Ser-912. Residues 830–903 (EFLHSQNSLS…PAPELRASFL (74 aa)) are disordered. Residues 832–845 (LHSQNSLSPRSSLS) are compositionally biased toward low complexity. The segment at 946-980 (LSREGQPIPESGDPKGTPKSDAEPEPGNLSEKVSH) is disordered. Positions 957 to 967 (GDPKGTPKSDA) are enriched in basic and acidic residues. Positions 972 to 1034 (GNLSEKVSHL…TRLLLASKQL (63 aa)) form a coiled coil.

In terms of assembly, interacts with RRP1B; the interaction leads to inhibition of SIPA1 GTPase activity. As to expression, expressed in fetal as well as in adult tissues. Expressed abundantly in the lymphoid tissues such as thymus, spleen and peripheral blood lymphocytes and also shows a significant expression in the spinal cord.

Its subcellular location is the nucleus. It is found in the cytoplasm. The protein localises to the perinuclear region. The protein resides in the endomembrane system. GTPase activator for the nuclear Ras-related regulatory proteins Rap1 and Rap2 in vitro, converting them to the putatively inactive GDP-bound state. Affects cell cycle progression. The chain is Signal-induced proliferation-associated protein 1 (SIPA1) from Homo sapiens (Human).